Consider the following 174-residue polypeptide: NADH-quinone oxidoreductase subunit I (174 aa).

2 consecutive 4Fe-4S ferredoxin-type domains span residues 44 to 74 and 90 to 119; these read LNRY…VEGD and RVYQ…MTND. [4Fe-4S] cluster-binding residues include Cys-54, Cys-57, Cys-60, Cys-64, Cys-99, Cys-102, Cys-105, and Cys-109.

Belongs to the complex I 23 kDa subunit family. NDH-1 is composed of 14 different subunits. Subunits NuoA, H, J, K, L, M, N constitute the membrane sector of the complex. [4Fe-4S] cluster serves as cofactor.

It is found in the cell membrane. It carries out the reaction a quinone + NADH + 5 H(+)(in) = a quinol + NAD(+) + 4 H(+)(out). Functionally, NDH-1 shuttles electrons from NADH, via FMN and iron-sulfur (Fe-S) centers, to quinones in the respiratory chain. The immediate electron acceptor for the enzyme in this species is believed to be menaquinone. Couples the redox reaction to proton translocation (for every two electrons transferred, four hydrogen ions are translocated across the cytoplasmic membrane), and thus conserves the redox energy in a proton gradient. The polypeptide is NADH-quinone oxidoreductase subunit I (Mycobacterium sp. (strain KMS)).